Here is a 464-residue protein sequence, read N- to C-terminus: V-type ATP synthase beta chain (464 aa).

It belongs to the ATPase alpha/beta chains family.

Its function is as follows. Produces ATP from ADP in the presence of a proton gradient across the membrane. The V-type beta chain is a regulatory subunit. The sequence is that of V-type ATP synthase beta chain from Streptococcus sanguinis (strain SK36).